We begin with the raw amino-acid sequence, 114 residues long: Immunoglobulin kappa variable 6D-21 (114 aa).

Positions 1-19 are cleaved as a signal peptide; the sequence is MSPSQLIGFLLLWVPASRG. The framework-1 stretch occupies residues 20–42; it reads EIVLTQSPDFQSVTPKEKVTITC. The 95-residue stretch at 20–114 folds into the Ig-like domain; the sequence is EIVLTQSPDF…YYCHQSSSLP (95 aa). Cys42 and Cys107 are disulfide-bonded. Residues 43 to 53 are complementarity-determining-1; the sequence is RASQSIGSSLH. Residues 54 to 68 form a framework-2 region; sequence WYQQKPDQSPKLLIK. The segment at 69-75 is complementarity-determining-2; sequence YASQSIS. Positions 76 to 107 are framework-3; it reads GVPSRFSGSGSGTDFTLTINSLEAEDAAAYYC. Positions 108-114 are complementarity-determining-3; the sequence is HQSSSLP.

As to quaternary structure, immunoglobulins are composed of two identical heavy chains and two identical light chains; disulfide-linked.

It localises to the secreted. The protein localises to the cell membrane. Its function is as follows. V region of the variable domain of immunoglobulin light chains that participates in the antigen recognition. Immunoglobulins, also known as antibodies, are membrane-bound or secreted glycoproteins produced by B lymphocytes. In the recognition phase of humoral immunity, the membrane-bound immunoglobulins serve as receptors which, upon binding of a specific antigen, trigger the clonal expansion and differentiation of B lymphocytes into immunoglobulins-secreting plasma cells. Secreted immunoglobulins mediate the effector phase of humoral immunity, which results in the elimination of bound antigens. The antigen binding site is formed by the variable domain of one heavy chain, together with that of its associated light chain. Thus, each immunoglobulin has two antigen binding sites with remarkable affinity for a particular antigen. The variable domains are assembled by a process called V-(D)-J rearrangement and can then be subjected to somatic hypermutations which, after exposure to antigen and selection, allow affinity maturation for a particular antigen. The polypeptide is Immunoglobulin kappa variable 6D-21 (Homo sapiens (Human)).